The chain runs to 541 residues: Chaperonin GroEL 2 (541 aa).

Residues 29-32 (TLGP), 86-90 (DGTTT), Gly-413, 476-478 (NAA), and Asp-492 contribute to the ATP site.

The protein belongs to the chaperonin (HSP60) family. Forms a cylinder of 14 subunits composed of two heptameric rings stacked back-to-back. Interacts with the co-chaperonin GroES.

The protein resides in the secreted. The protein localises to the capsule. Its subcellular location is the cell surface. It is found in the cell wall. It carries out the reaction ATP + H2O + a folded polypeptide = ADP + phosphate + an unfolded polypeptide.. Functionally, together with its co-chaperonin GroES, plays an essential role in assisting protein folding. The GroEL-GroES system forms a nano-cage that allows encapsulation of the non-native substrate proteins and provides a physical environment optimized to promote and accelerate protein folding. This is Chaperonin GroEL 2 from Mycobacterium ulcerans (strain Agy99).